Reading from the N-terminus, the 73-residue chain is MATQSKYQSKQFDALSGDLIAILEKHKAPVDLSLMALGNMVTNILLENVQTGAQRLALAEAFSNALKNSLKIK.

The protein belongs to the UPF0352 family.

The chain is UPF0352 protein APL_0584 from Actinobacillus pleuropneumoniae serotype 5b (strain L20).